The following is a 259-amino-acid chain: ATP synthase subunit a (259 aa).

5 helical membrane passes run 29–49, 89–109, 132–154, 209–229, and 230–250; these read TVNI…IWLF, LIAP…AMDL, SADV…FYSI, IFIL…NVPW, and AIFH…LTIV.

The protein belongs to the ATPase A chain family. F-type ATPases have 2 components, CF(1) - the catalytic core - and CF(0) - the membrane proton channel. CF(1) has five subunits: alpha(3), beta(3), gamma(1), delta(1), epsilon(1). CF(0) has three main subunits: a(1), b(2) and c(9-12). The alpha and beta chains form an alternating ring which encloses part of the gamma chain. CF(1) is attached to CF(0) by a central stalk formed by the gamma and epsilon chains, while a peripheral stalk is formed by the delta and b chains.

It is found in the cell inner membrane. In terms of biological role, key component of the proton channel; it plays a direct role in the translocation of protons across the membrane. This Tolumonas auensis (strain DSM 9187 / NBRC 110442 / TA 4) protein is ATP synthase subunit a.